We begin with the raw amino-acid sequence, 266 residues long: Pyridoxal phosphate phosphatase YigL (266 aa).

Catalysis depends on D8, which acts as the Nucleophile. A Mg(2+)-binding site is contributed by D8. Phosphate is bound at residue L9. D10 serves as a coordination point for Mg(2+). Residues 42 to 43 (TG) and K191 each bind phosphate. D214 is a Mg(2+) binding site. Residue N217 coordinates phosphate.

It belongs to the HAD-like hydrolase superfamily. Cof family. Requires Mg(2+) as cofactor. It depends on Mn(2+) as a cofactor. The cofactor is Co(2+). Zn(2+) is required as a cofactor.

The catalysed reaction is pyridoxal 5'-phosphate + H2O = pyridoxal + phosphate. The enzyme catalyses sugar phosphate + H2O = sugar + phosphate.. In terms of biological role, catalyzes Strongly the dephosphorylation of pyridoxal-phosphate (PLP) and moderately the dephosphorylation of 2-deoxyglucose 6-phosphate (2bGLU6P) and beta-glucose 6-phosphate (bGlu6P). Also hydrolyzes both purines (GMP and IMP) and pyrimidines as secondary substrates. This chain is Pyridoxal phosphate phosphatase YigL (yigL), found in Escherichia coli (strain K12).